Here is a 384-residue protein sequence, read N- to C-terminus: Acetylgalactosaminyl-O-glycosyl-glycoprotein beta-1,3-N-acetylglucosaminyltransferase (384 aa).

The Cytoplasmic segment spans residues 1-12 (MAFPCRRSLTAK). The helical; Signal-anchor for type II membrane protein transmembrane segment at 13 to 31 (TLACLLVGVSFLALQQWFL) threads the bilayer. Over 32 to 384 (QAPRSPREER…LSCDRGHRVS (353 aa)) the chain is Lumenal. Residues 34-68 (PRSPREERSPQEETPEGPTDAPAADEPPSELVPGP) are disordered. N-linked (GlcNAc...) asparagine glycosylation is found at asparagine 73, asparagine 77, and asparagine 196.

This sequence belongs to the glycosyltransferase 31 family. As to expression, present in stomach and colon (at protein level). Restricted in the stomach, colon and small intestine, where core 3 structure is present.

The protein localises to the golgi apparatus membrane. It catalyses the reaction a 3-O-[N-acetyl-alpha-D-galactosaminyl]-L-threonyl-[protein] + UDP-N-acetyl-alpha-D-glucosamine = a 3-O-[N-acetyl-beta-D-glucosaminyl-(1-&gt;3)-N-acetyl-alpha-D-galactosaminyl]-L-threonyl-[protein] + UDP + H(+). The catalysed reaction is a 3-O-[N-acetyl-alpha-D-galactosaminyl]-L-seryl-[protein] + UDP-N-acetyl-alpha-D-glucosamine = 3-O-[N-acetyl-beta-D-glucosaminyl-(1-&gt;3)-N-acetyl-alpha-D-galactosaminyl]-L-seryl-[protein] + UDP + H(+). Its pathway is protein modification; protein glycosylation. Its function is as follows. Beta-1,3-N-acetylglucosaminyltransferase that synthesizes the core 3 structure of the O-glycan, an important precursor in the biosynthesis of mucin-type glycoproteins. Plays an important role in the synthesis of mucin-type O-glycans in digestive organs. This is Acetylgalactosaminyl-O-glycosyl-glycoprotein beta-1,3-N-acetylglucosaminyltransferase (B3GNT6) from Homo sapiens (Human).